We begin with the raw amino-acid sequence, 67 residues long: Large ribosomal subunit protein bL35 (67 aa).

This sequence belongs to the bacterial ribosomal protein bL35 family.

The sequence is that of Large ribosomal subunit protein bL35 from Rhizobium johnstonii (strain DSM 114642 / LMG 32736 / 3841) (Rhizobium leguminosarum bv. viciae).